We begin with the raw amino-acid sequence, 957 residues long: Nitrite reductase [NAD(P)H] large subunit (957 aa).

Tyr-44–Ser-79 is a binding site for FAD. Leu-193–Arg-225 contributes to the NAD(+) binding site. [2Fe-2S] cluster is bound by residues Cys-423, Cys-425, Cys-457, and Cys-460. [4Fe-4S] cluster is bound by residues Cys-639, Cys-645, Cys-679, and Cys-683. Cys-683 provides a ligand contact to siroheme.

Belongs to the nitrite and sulfite reductase 4Fe-4S domain family. In terms of assembly, homodimer which associates with NirD. Siroheme is required as a cofactor. [2Fe-2S] cluster serves as cofactor. It depends on [4Fe-4S] cluster as a cofactor. Requires FAD as cofactor.

It carries out the reaction NH4(+) + 3 NADP(+) + 2 H2O = nitrite + 3 NADPH + 5 H(+). The catalysed reaction is NH4(+) + 3 NAD(+) + 2 H2O = nitrite + 3 NADH + 5 H(+). It participates in nitrogen metabolism; nitrate reduction (assimilation). The protein is Nitrite reductase [NAD(P)H] large subunit (nasB) of Klebsiella oxytoca.